The following is a 436-amino-acid chain: O-phosphoseryl-tRNA(Sec) selenium transferase (436 aa).

The tetramerization stretch occupies residues 1–44 (MLDFNIEGLIPKNMEKRGELVLNEYLKEIEDVFNHRKIPENGID). Arginine 72 lines the pyridoxal 5'-phosphate pocket. Positions 93 to 103 (GRSGNLVDPQP) are phosphate loop (P-loop). Residues arginine 94, serine 95, and glutamine 102 each coordinate substrate. N6-(pyridoxal phosphate)lysine is present on lysine 278. Arginine 307 contributes to the substrate binding site.

This sequence belongs to the SepSecS family. Homotetramer. It depends on pyridoxal 5'-phosphate as a cofactor.

It catalyses the reaction O-phospho-L-seryl-tRNA(Sec) + selenophosphate + H2O = L-selenocysteinyl-tRNA(Sec) + 2 phosphate. Its pathway is aminoacyl-tRNA biosynthesis; selenocysteinyl-tRNA(Sec) biosynthesis; selenocysteinyl-tRNA(Sec) from L-seryl-tRNA(Sec) (archaeal/eukaryal route): step 2/2. In terms of biological role, converts O-phosphoseryl-tRNA(Sec) to selenocysteinyl-tRNA(Sec) required for selenoprotein biosynthesis. The polypeptide is O-phosphoseryl-tRNA(Sec) selenium transferase (spcS) (Methanococcus maripaludis (strain DSM 14266 / JCM 13030 / NBRC 101832 / S2 / LL)).